The sequence spans 269 residues: 2-keto-4-pentenoate hydratase (269 aa).

The protein belongs to the hydratase/decarboxylase family. MhpD subfamily. It depends on a divalent metal cation as a cofactor.

The catalysed reaction is (S)-4-hydroxy-2-oxopentanoate = (2Z)-2-hydroxypenta-2,4-dienoate + H2O. It participates in aromatic compound metabolism; 3-phenylpropanoate degradation. Its function is as follows. Catalyzes the conversion of 2-hydroxypentadienoic acid (enolic form of 2-oxopent-4-enoate) to 4-hydroxy-2-ketopentanoic acid. This chain is 2-keto-4-pentenoate hydratase, found in Paraburkholderia xenovorans (strain LB400).